Reading from the N-terminus, the 509-residue chain is ATP synthase subunit alpha (509 aa).

169 to 176 (GDRQTGKT) is an ATP binding site.

This sequence belongs to the ATPase alpha/beta chains family. In terms of assembly, F-type ATPases have 2 components, CF(1) - the catalytic core - and CF(0) - the membrane proton channel. CF(1) has five subunits: alpha(3), beta(3), gamma(1), delta(1), epsilon(1). CF(0) has three main subunits: a(1), b(2) and c(9-12). The alpha and beta chains form an alternating ring which encloses part of the gamma chain. CF(1) is attached to CF(0) by a central stalk formed by the gamma and epsilon chains, while a peripheral stalk is formed by the delta and b chains.

Its subcellular location is the cell inner membrane. It catalyses the reaction ATP + H2O + 4 H(+)(in) = ADP + phosphate + 5 H(+)(out). Produces ATP from ADP in the presence of a proton gradient across the membrane. The alpha chain is a regulatory subunit. The chain is ATP synthase subunit alpha from Methylorubrum extorquens (strain CM4 / NCIMB 13688) (Methylobacterium extorquens).